A 579-amino-acid chain; its full sequence is CTP synthase (579 aa).

Residues 1–281 (MPALRKHPQT…DAYVVRRLNL (281 aa)) are amidoligase domain. Residue S23 coordinates CTP. S23 contacts UTP. Residues 24 to 29 (SLGKGL) and D81 contribute to the ATP site. Residues D81 and E155 each coordinate Mg(2+). CTP is bound by residues 162-164 (DIE), 202-207 (KTKPTQ), and K238. UTP-binding positions include 202–207 (KTKPTQ) and K238. Positions 306–554 (RIALVGKYID…IGAALDYKAA (249 aa)) constitute a Glutamine amidotransferase type-1 domain. G369 is an L-glutamine binding site. The active-site Nucleophile; for glutamine hydrolysis is the C396. Residues 397 to 400 (LGLQ), E419, and R480 each bind L-glutamine. Residues H527 and E529 contribute to the active site.

This sequence belongs to the CTP synthase family. In terms of assembly, homotetramer.

The enzyme catalyses UTP + L-glutamine + ATP + H2O = CTP + L-glutamate + ADP + phosphate + 2 H(+). It catalyses the reaction L-glutamine + H2O = L-glutamate + NH4(+). The catalysed reaction is UTP + NH4(+) + ATP = CTP + ADP + phosphate + 2 H(+). It functions in the pathway pyrimidine metabolism; CTP biosynthesis via de novo pathway; CTP from UDP: step 2/2. With respect to regulation, allosterically activated by GTP, when glutamine is the substrate; GTP has no effect on the reaction when ammonia is the substrate. The allosteric effector GTP functions by stabilizing the protein conformation that binds the tetrahedral intermediate(s) formed during glutamine hydrolysis. Inhibited by the product CTP, via allosteric rather than competitive inhibition. Catalyzes the ATP-dependent amination of UTP to CTP with either L-glutamine or ammonia as the source of nitrogen. Regulates intracellular CTP levels through interactions with the four ribonucleotide triphosphates. The chain is CTP synthase from Mycobacterium sp. (strain KMS).